Consider the following 456-residue polypeptide: Short chain dehydrogenase tazN (456 aa).

7 residues coordinate NADP(+): Val-45, Asp-99, Asn-126, Arg-160, Tyr-195, Lys-199, and Thr-229. The Proton donor role is filled by Tyr-195. The Lowers pKa of active site Tyr role is filled by Lys-199.

The protein belongs to the short-chain dehydrogenases/reductases (SDR) family.

It functions in the pathway secondary metabolite biosynthesis. Short chain dehydrogenase; part of the gene cluster that mediates the biosynthesis of azaterrilone A and other azaphilones, a class of fungal metabolites characterized by a highly oxygenated pyrano-quinone bicyclic core and exhibiting a broad range of bioactivities. The first step of the pathway begins with the non-reducing polyketide synthase tazA that assembles one acetyl-CoA starter unit, five malonyl-CoA units, and catalyzes a series of Claisen condensations, methylation, PT-mediated cyclization, and finally releases the first hexaketide precursor through the R-domain. The tazA product then undergoes reduction on its terminal ketone and the following pyran-ring formation by yet undetermined enzyme(s). Dehydration and enoyl reduction, possibly involving the trans-enoyl reductase tazE leads to the next intermediate. TazD is predicted as an acetyltransferase and might catalyze the acetylation steps leading to the synthesis of azaterrilone A. Azaterrilone A is not the final product of the taz pathway and both the highly reducing polyketide synthase tazB and the dual enzyme tazHJ catalyze late steps of the pathway, leading to the production of the 2 final stereoisomers that contain additional polyketide modification whose structures have still to be determined. This is Short chain dehydrogenase tazN from Aspergillus terreus (strain NIH 2624 / FGSC A1156).